A 251-amino-acid polypeptide reads, in one-letter code: Hydroxyacylglutathione hydrolase (251 aa).

Residues H53, H55, D57, H58, H110, D127, and H165 each contribute to the Zn(2+) site.

This sequence belongs to the metallo-beta-lactamase superfamily. Glyoxalase II family. As to quaternary structure, monomer. Zn(2+) is required as a cofactor.

It carries out the reaction an S-(2-hydroxyacyl)glutathione + H2O = a 2-hydroxy carboxylate + glutathione + H(+). It functions in the pathway secondary metabolite metabolism; methylglyoxal degradation; (R)-lactate from methylglyoxal: step 2/2. Thiolesterase that catalyzes the hydrolysis of S-D-lactoyl-glutathione to form glutathione and D-lactic acid. In Escherichia coli O17:K52:H18 (strain UMN026 / ExPEC), this protein is Hydroxyacylglutathione hydrolase.